We begin with the raw amino-acid sequence, 590 residues long: uncharacterized protein (590 aa).

The segment at 330–368 is disordered; sequence IDKSESDIDDSESDIDSENDIDSESDIDDSETDDEEELE. Over residues 336–368 the composition is skewed to acidic residues; that stretch reads DIDDSESDIDSENDIDSESDIDDSETDDEEELE.

Belongs to the mimivirus L5 family.

This is an uncharacterized protein from Acanthamoeba polyphaga mimivirus (APMV).